Here is a 295-residue protein sequence, read N- to C-terminus: uncharacterized protein (295 aa).

In terms of domain architecture, ABC transporter spans leucine 2 to valine 226. Glycine 34–threonine 41 is an ATP binding site.

It belongs to the ABC transporter superfamily.

This is an uncharacterized protein from Bacillus subtilis (strain 168).